Here is an 874-residue protein sequence, read N- to C-terminus: Leucine--tRNA ligase (874 aa).

Positions 43–53 match the 'HIGH' region motif; the sequence is PYPSGRIHIGH. A 'KMSKS' region motif is present at residues 630–634; sequence KMSKS. Lysine 633 is a binding site for ATP.

This sequence belongs to the class-I aminoacyl-tRNA synthetase family.

The protein resides in the cytoplasm. The enzyme catalyses tRNA(Leu) + L-leucine + ATP = L-leucyl-tRNA(Leu) + AMP + diphosphate. This chain is Leucine--tRNA ligase, found in Bradyrhizobium sp. (strain ORS 278).